The sequence spans 422 residues: 3-phosphoshikimate 1-carboxyvinyltransferase (422 aa).

3-phosphoshikimate contacts are provided by Lys-20, Ser-21, and Arg-25. Residue Lys-20 participates in phosphoenolpyruvate binding. Residues Gly-91 and Arg-119 each contribute to the phosphoenolpyruvate site. The 3-phosphoshikimate site is built by Thr-163, Ser-164, Gln-165, Asp-305, Gln-328, and Lys-332. Phosphoenolpyruvate is bound at residue Gln-165. Residue Asp-305 is the Proton acceptor of the active site. Arg-336 and Arg-377 together coordinate phosphoenolpyruvate.

This sequence belongs to the EPSP synthase family. As to quaternary structure, monomer.

It is found in the cytoplasm. It carries out the reaction 3-phosphoshikimate + phosphoenolpyruvate = 5-O-(1-carboxyvinyl)-3-phosphoshikimate + phosphate. It functions in the pathway metabolic intermediate biosynthesis; chorismate biosynthesis; chorismate from D-erythrose 4-phosphate and phosphoenolpyruvate: step 6/7. Catalyzes the transfer of the enolpyruvyl moiety of phosphoenolpyruvate (PEP) to the 5-hydroxyl of shikimate-3-phosphate (S3P) to produce enolpyruvyl shikimate-3-phosphate and inorganic phosphate. The chain is 3-phosphoshikimate 1-carboxyvinyltransferase from Ruminiclostridium cellulolyticum (strain ATCC 35319 / DSM 5812 / JCM 6584 / H10) (Clostridium cellulolyticum).